A 337-amino-acid chain; its full sequence is Protein SphX (337 aa).

A signal peptide spans 1 to 30 (MTTLKPALRRAAVLLPIAAVASSLFPIQEA).

The protein belongs to the PstS family. The N-terminus is blocked.

It is found in the cell inner membrane. In terms of biological role, may be involved in the system for phosphate transport across the cytoplasmic membrane. The sequence is that of Protein SphX (sphX) from Synechococcus elongatus (strain ATCC 33912 / PCC 7942 / FACHB-805) (Anacystis nidulans R2).